The primary structure comprises 657 residues: Translation factor GUF1, mitochondrial (657 aa).

The N-terminal 39 residues, 1-39 (MRGCLQSVKWLTSAVRQSQSLTSSTRFPRRLFNTSTLHY), are a transit peptide targeting the mitochondrion. In terms of domain architecture, tr-type G spans 59 to 239 (ERFRNFCIVA…TVIEQVPAPV (181 aa)). GTP is bound by residues 68-75 (AHVDHGKS), 132-136 (DTPGH), and 186-189 (NKVD).

Belongs to the TRAFAC class translation factor GTPase superfamily. Classic translation factor GTPase family. LepA subfamily.

It is found in the mitochondrion inner membrane. It catalyses the reaction GTP + H2O = GDP + phosphate + H(+). In terms of biological role, promotes mitochondrial protein synthesis. May act as a fidelity factor of the translation reaction, by catalyzing a one-codon backward translocation of tRNAs on improperly translocated ribosomes. Binds to mitochondrial ribosomes in a GTP-dependent manner. The protein is Translation factor GUF1, mitochondrial of Blastomyces gilchristii (strain SLH14081) (Blastomyces dermatitidis).